A 77-amino-acid polypeptide reads, in one-letter code: Acyl carrier protein (77 aa).

Residues 2–77 (SSIDKRIKEI…DAIDYITDHT (76 aa)) enclose the Carrier domain. The residue at position 37 (S37) is an O-(pantetheine 4'-phosphoryl)serine.

The protein belongs to the acyl carrier protein (ACP) family. 4'-phosphopantetheine is transferred from CoA to a specific serine of apo-ACP by AcpS. This modification is essential for activity because fatty acids are bound in thioester linkage to the sulfhydryl of the prosthetic group.

Its subcellular location is the cytoplasm. The protein operates within lipid metabolism; fatty acid biosynthesis. In terms of biological role, carrier of the growing fatty acid chain in fatty acid biosynthesis. In Geotalea daltonii (strain DSM 22248 / JCM 15807 / FRC-32) (Geobacter daltonii), this protein is Acyl carrier protein.